The primary structure comprises 235 residues: Peptidyl-tRNA hydrolase (235 aa).

Y14 contacts tRNA. Catalysis depends on H19, which acts as the Proton acceptor. TRNA is bound by residues F64, N66, and N112. Residues 188 to 235 (APARNSGTRPDNPGKGSPEKPAAKPANDPIAEPPSLSDRLRALTERFR) form a disordered region. Residues 225-235 (DRLRALTERFR) are compositionally biased toward basic and acidic residues.

Belongs to the PTH family. As to quaternary structure, monomer.

The protein localises to the cytoplasm. It carries out the reaction an N-acyl-L-alpha-aminoacyl-tRNA + H2O = an N-acyl-L-amino acid + a tRNA + H(+). Hydrolyzes ribosome-free peptidyl-tRNAs (with 1 or more amino acids incorporated), which drop off the ribosome during protein synthesis, or as a result of ribosome stalling. Functionally, catalyzes the release of premature peptidyl moieties from peptidyl-tRNA molecules trapped in stalled 50S ribosomal subunits, and thus maintains levels of free tRNAs and 50S ribosomes. The protein is Peptidyl-tRNA hydrolase of Paracoccus denitrificans (strain Pd 1222).